The primary structure comprises 418 residues: ORC1-type DNA replication protein 2 (418 aa).

ATP-binding positions include Thr-72–Val-76, Tyr-218, and Arg-230.

The protein belongs to the CDC6/cdc18 family.

In terms of biological role, involved in regulation of DNA replication. This is ORC1-type DNA replication protein 2 (cdc6-2) from Sulfurisphaera tokodaii (strain DSM 16993 / JCM 10545 / NBRC 100140 / 7) (Sulfolobus tokodaii).